The sequence spans 191 residues: Ribosome maturation factor RimM (191 aa).

In terms of domain architecture, PRC barrel spans 107–184 (EDDEWHQDDL…LVLVSPPPGL (78 aa)).

The protein belongs to the RimM family. As to quaternary structure, binds ribosomal protein uS19.

It localises to the cytoplasm. Its function is as follows. An accessory protein needed during the final step in the assembly of 30S ribosomal subunit, possibly for assembly of the head region. Essential for efficient processing of 16S rRNA. May be needed both before and after RbfA during the maturation of 16S rRNA. It has affinity for free ribosomal 30S subunits but not for 70S ribosomes. The polypeptide is Ribosome maturation factor RimM (Kocuria rhizophila (strain ATCC 9341 / DSM 348 / NBRC 103217 / DC2201)).